Reading from the N-terminus, the 296-residue chain is 4-hydroxybenzoate octaprenyltransferase (296 aa).

Transmembrane regions (helical) follow at residues 28–48, 52–72, 102–122, 123–140, 146–166, 169–189, 219–239, 241–261, and 275–295; these read PIGI…AGKG, LNTV…GCVI, ALVL…FTNS, TTIW…CYPF, YYPQ…AFTA, GELP…TVGY, VIIL…GSRF, LGAF…WEFW, and FLHN…DYAL.

This sequence belongs to the UbiA prenyltransferase family. Mg(2+) serves as cofactor.

It is found in the cell inner membrane. It carries out the reaction all-trans-octaprenyl diphosphate + 4-hydroxybenzoate = 4-hydroxy-3-(all-trans-octaprenyl)benzoate + diphosphate. It functions in the pathway cofactor biosynthesis; ubiquinone biosynthesis. Catalyzes the prenylation of para-hydroxybenzoate (PHB) with an all-trans polyprenyl group. Mediates the second step in the final reaction sequence of ubiquinone-8 (UQ-8) biosynthesis, which is the condensation of the polyisoprenoid side chain with PHB, generating the first membrane-bound Q intermediate 3-octaprenyl-4-hydroxybenzoate. The protein is 4-hydroxybenzoate octaprenyltransferase of Pseudomonas syringae pv. tomato (strain ATCC BAA-871 / DC3000).